A 259-amino-acid chain; its full sequence is Eukaryotic translation initiation factor 3 subunit J (259 aa).

Positions M1–S12 are enriched in low complexity. The segment at M1 to V70 is sufficient for interaction with EIF3B. Positions M1 to P111 are disordered. Phosphoserine is present on residues S12, S14, and S21. The segment covering E41–K60 has biased composition (acidic residues). The segment covering K61–K107 has biased composition (basic and acidic residues). Residues K71 to T136 adopt a coiled-coil conformation. A Glycyl lysine isopeptide (Lys-Gly) (interchain with G-Cter in SUMO2) cross-link involves residue K107. T110 is modified (phosphothreonine). Phosphoserine is present on S128. The disordered stretch occupies residues S218–Y247. A promotes stable association with the 40S ribosome region spans residues Y244–M259. Y255 is subject to Phosphotyrosine.

This sequence belongs to the eIF-3 subunit J family. As to quaternary structure, component of the eukaryotic translation initiation factor 3 (eIF-3) complex, which is composed of 13 subunits: EIF3A, EIF3B, EIF3C, EIF3D, EIF3E, EIF3F, EIF3G, EIF3H, EIF3I, EIF3J, EIF3K, EIF3L and EIF3M. The eIF-3 complex appears to include 3 stable modules: module A is composed of EIF3A, EIF3B, EIF3G and EIF3I; module B is composed of EIF3F, EIF3H, and EIF3M; and module C is composed of EIF3C, EIF3D, EIF3E, EIF3K and EIF3L. EIF3C of module C binds EIF3B of module A and EIF3H of module B, thereby linking the three modules. EIF3J is a labile subunit that binds to the eIF-3 complex via EIF3B. The eIF-3 complex interacts with RPS6KB1 under conditions of nutrient depletion. Mitogenic stimulation leads to binding and activation of a complex composed of MTOR and RPTOR, leading to phosphorylation and release of RPS6KB1 and binding of EIF4B to eIF-3. Phosphorylated. Phosphorylation is enhanced upon serum stimulation.

It is found in the cytoplasm. Component of the eukaryotic translation initiation factor 3 (eIF-3) complex, which is required for several steps in the initiation of protein synthesis. The eIF-3 complex associates with the 40S ribosome and facilitates the recruitment of eIF-1, eIF-1A, eIF-2:GTP:methionyl-tRNAi and eIF-5 to form the 43S pre-initiation complex (43S PIC). The eIF-3 complex stimulates mRNA recruitment to the 43S PIC and scanning of the mRNA for AUG recognition. The eIF-3 complex is also required for disassembly and recycling of post-termination ribosomal complexes and subsequently prevents premature joining of the 40S and 60S ribosomal subunits prior to initiation. The eIF-3 complex specifically targets and initiates translation of a subset of mRNAs involved in cell proliferation, including cell cycling, differentiation and apoptosis, and uses different modes of RNA stem-loop binding to exert either translational activation or repression. This subunit binds directly within the mRNA entry channel of the 40S ribosome to the aminoacyl (A) site. It may regulate the interaction between the 43S PIC and mRNA. The protein is Eukaryotic translation initiation factor 3 subunit J of Pongo abelii (Sumatran orangutan).